A 583-amino-acid polypeptide reads, in one-letter code: Orphan steroid hormone receptor 2 (583 aa).

Positions 84 to 159 form a DNA-binding region, nuclear receptor; sequence IELCAVCGDK…MGMKSDSVQC (76 aa). NR C4-type zinc fingers lie at residues 87-107 and 123-142; these read CAVC…CEGC and CRGN…CQYC. One can recognise an NR LBD domain in the interval 248–563; the sequence is TLASVVTSLA…SIIPYILRME (316 aa).

The protein belongs to the nuclear hormone receptor family. NR2 subfamily. Binds DNA as a monomer. Expressed uniformly in the early embryo. In contrast, larval expression is localized to the epaulettes and mouth epithelium. Expressed in multiple adult organs including lantern muscle, tubefeet, intestine, coelomocytes and gonads. In the adult ovaries and testes, expression is specifically localized to the smooth muscle epithelial layer of cells which surround the ovarioles and acini, respectively (at protein level).

It localises to the cytoplasm. Its subcellular location is the nucleus. Orphan nuclear receptor. Binds to the hormone response element in the upstream promoter region of the CYIIIB gene in vitro. Both isoform 1 and isoform 2 bind DNA. This is Orphan steroid hormone receptor 2 from Strongylocentrotus purpuratus (Purple sea urchin).